The chain runs to 303 residues: Probable 5-dehydro-4-deoxyglucarate dehydratase (303 aa).

It belongs to the DapA family.

It catalyses the reaction 5-dehydro-4-deoxy-D-glucarate + H(+) = 2,5-dioxopentanoate + CO2 + H2O. It functions in the pathway carbohydrate acid metabolism; D-glucarate degradation; 2,5-dioxopentanoate from D-glucarate: step 2/2. This is Probable 5-dehydro-4-deoxyglucarate dehydratase from Ectopseudomonas mendocina (strain ymp) (Pseudomonas mendocina).